The chain runs to 317 residues: Uridine phosphorylase 2 (317 aa).

Phosphate-binding positions include Gly66, Arg100, and 144-147; that span reads RIGT. A disulfide bond links Cys95 and Cys102. Residues 148–149 and 223–225 each bind uridine; these read SG and QGR.

Belongs to the PNP/UDP phosphorylase family. As to quaternary structure, homodimer. Predominantly expressed in kidney.

The enzyme catalyses uridine + phosphate = alpha-D-ribose 1-phosphate + uracil. The catalysed reaction is 2'-deoxyuridine + phosphate = 2-deoxy-alpha-D-ribose 1-phosphate + uracil. Its pathway is pyrimidine metabolism; UMP biosynthesis via salvage pathway; uracil from uridine (phosphorylase route): step 1/1. A conditional disulfide bridge can form within the protein that dislocates a critical phosphate-coordinating arginine Arg-100 away from the active site, disabling the enzyme. In terms of biological role, catalyzes the reversible phosphorylytic cleavage of uridine to uracil and ribose-1-phosphate which can then be utilized as carbon and energy sources or in the rescue of pyrimidine bases for nucleotide synthesis. Shows broad substrate specificity and can also accept deoxyuridine and other analogous compounds. This is Uridine phosphorylase 2 from Homo sapiens (Human).